A 307-amino-acid chain; its full sequence is NAD(+) hydrolase TcpC (307 aa).

A helical transmembrane segment spans residues 22-42 (YNILFFIFLSIAIPFLLFLAW). One can recognise a TIR domain in the interval 169-303 (THYDFFISHA…EIARELAEIA (135 aa)). Residues 178–179 (AK) and Glu208 contribute to the NAD(+) site. Glu244 is a catalytic residue.

As to quaternary structure, interacts with host MYD88. Interacts with host TLR4.

The protein localises to the secreted. Its subcellular location is the membrane. The enzyme catalyses NAD(+) + H2O = ADP-D-ribose + nicotinamide + H(+). It carries out the reaction NADP(+) + H2O = ADP-D-ribose 2'-phosphate + nicotinamide + H(+). In terms of biological role, virulence factor that suppresses host Toll-like receptor (TLR)-mediated cytokine production upon infection, thereby increasing bacterial burden in the urinary tract and promoting renal tissue damage. Acts as a NAD(+) hydrolase (NADase) by catalyzing cleavage of NAD(+) into ADP-D-ribose (ADPR) and nicotinamide. Also able to hydrolyze NADP(+), but not other NAD(+)-related molecules. The protein is NAD(+) hydrolase TcpC of Escherichia coli O6:H1 (strain CFT073 / ATCC 700928 / UPEC).